Consider the following 296-residue polypeptide: Phosphoribosylaminoimidazole-succinocarboxamide synthase (296 aa).

Belongs to the SAICAR synthetase family.

It catalyses the reaction 5-amino-1-(5-phospho-D-ribosyl)imidazole-4-carboxylate + L-aspartate + ATP = (2S)-2-[5-amino-1-(5-phospho-beta-D-ribosyl)imidazole-4-carboxamido]succinate + ADP + phosphate + 2 H(+). Its pathway is purine metabolism; IMP biosynthesis via de novo pathway; 5-amino-1-(5-phospho-D-ribosyl)imidazole-4-carboxamide from 5-amino-1-(5-phospho-D-ribosyl)imidazole-4-carboxylate: step 1/2. The sequence is that of Phosphoribosylaminoimidazole-succinocarboxamide synthase from Geotalea uraniireducens (strain Rf4) (Geobacter uraniireducens).